The primary structure comprises 1074 residues: DNA double-strand break repair Rad50 ATPase (1074 aa).

ATP-binding positions include Arg-12, 32-38 (NGSGKSS), and Gln-142. 2 coiled-coil regions span residues 355-402 (ELEK…REKA) and 452-506 (NLVE…KGLG). A Zinc-hook domain is found at 512–611 (LENLEDFSEL…KITRLKDAKK (100 aa)). The Zn(2+) site is built by Cys-559 and Cys-562. 4 coiled-coil regions span residues 574–611 (TAEE…DAKK), 649–678 (LKLE…LQVQ), 749–823 (KEKL…EILE), and 865–895 (TEEK…LKAL). 973–978 (LLSGGE) is a binding site for ATP.

The protein belongs to the SMC family. RAD50 subfamily. In terms of assembly, homodimer. Forms a heterotetramer composed of two Mre11 subunits and two Rad50 subunits. The cofactor is Zn(2+).

Functionally, part of the Rad50/Mre11 complex, which is involved in the early steps of DNA double-strand break (DSB) repair. The complex may facilitate opening of the processed DNA ends to aid in the recruitment of HerA and NurA. Rad50 controls the balance between DNA end bridging and DNA resection via ATP-dependent structural rearrangements of the Rad50/Mre11 complex. The polypeptide is DNA double-strand break repair Rad50 ATPase (Methanosarcina acetivorans (strain ATCC 35395 / DSM 2834 / JCM 12185 / C2A)).